Here is a 204-residue protein sequence, read N- to C-terminus: MSKRQEAKYKIDRRLGVNLWGRAKSPVNKREYGPGQHGQRRKKPSDYGMQLMAKQKLKGYYGNIGEKQFRRLYQEAVRRKGDSGENLIQLLERRLDAVVYRMKFAATPFASRQLINHGHILVNGRRVNIPSYTVKDGDSIEVRSKAKQFAFVMEAAASGERDIPDYLSVDSQALKGTYVRAPGLADVPYPVQMEPNLVIEFYSR.

The segment at 25 to 47 (SPVNKREYGPGQHGQRRKKPSDY) is disordered. Positions 93-156 (RRLDAVVYRM…KQFAFVMEAA (64 aa)) constitute an S4 RNA-binding domain.

The protein belongs to the universal ribosomal protein uS4 family. In terms of assembly, part of the 30S ribosomal subunit. Contacts protein S5. The interaction surface between S4 and S5 is involved in control of translational fidelity.

In terms of biological role, one of the primary rRNA binding proteins, it binds directly to 16S rRNA where it nucleates assembly of the body of the 30S subunit. Functionally, with S5 and S12 plays an important role in translational accuracy. The polypeptide is Small ribosomal subunit protein uS4 (Rhodospirillum centenum (strain ATCC 51521 / SW)).